Reading from the N-terminus, the 116-residue chain is MRAIITFALFCVLYVTVQGKTSSPKVQVYSHFPGEYGKENTLICHVSGFHPPDITIELLKDGEILPNTQQTDLAFEKGWQFHLTKSVTFKPERGQNYACSVRHMNNKNIYSWEPNM.

The signal sequence occupies residues 1–19 (MRAIITFALFCVLYVTVQG). The Ig-like C1-type domain occupies 24–110 (PKVQVYSHFP…VRHMNNKNIY (87 aa)). An intrachain disulfide couples Cys44 to Cys99.

The protein belongs to the beta-2-microglobulin family. As to quaternary structure, heterodimer of an alpha chain and a beta chain. Beta-2-microglobulin is the beta-chain of major histocompatibility complex class I molecules.

The protein localises to the secreted. In terms of biological role, component of the class I major histocompatibility complex (MHC). Involved in the presentation of peptide antigens to the immune system. The sequence is that of Beta-2-microglobulin (b2m) from Cyprinus carpio (Common carp).